The following is a 433-amino-acid chain: Alpha-(1,3)-fucosyltransferase fut-1 (433 aa).

Residues 1-12 (MTARSIKLFFAR) lie on the Cytoplasmic side of the membrane. A helical; Signal-anchor for type II membrane protein membrane pass occupies residues 13–32 (WKYLMFACCITYLLVIYAPI). Residues 33–433 (SKSEQKDWKE…GTLVDSIPLD (401 aa)) lie on the Lumenal side of the membrane. N-linked (GlcNAc...) asparagine glycosylation is found at Asn194 and Asn359.

This sequence belongs to the glycosyltransferase 10 family. Mg(2+) is required as a cofactor. Mn(2+) serves as cofactor. N-glycosylated. Glycosylation is important for enzymatic activity. Expressed in the pharyngeal-intestinal (PI) and anal valves. Expressed in ASG neurons and in one or two neurons in the retrovesicular ganglion and two neurons posterior to the PI valve and PHA and PHB neurons in the tail.

It localises to the golgi apparatus. The protein resides in the golgi stack membrane. The enzyme catalyses N(4)-{beta-D-GlcNAc-(1-&gt;2)-alpha-D-Man-(1-&gt;3)-[beta-D-GlcNAc-(1-&gt;2)-alpha-D-Man-(1-&gt;6)]-beta-D-Man-(1-&gt;4)-beta-D-GlcNAc-(1-&gt;4)-beta-D-GlcNAc}-L-asparaginyl-[protein] + GDP-beta-L-fucose = N(4)-{beta-D-GlcNAc-(1-&gt;2)-alpha-D-Man-(1-&gt;3)-[beta-D-GlcNAc-(1-&gt;2)-alpha-D-Man-(1-&gt;6)]-beta-D-Man-(1-&gt;4)-beta-D-GlcNAc-(1-&gt;4)-[alpha-L-Fuc(1-&gt;3)]-beta-D-GlcNAc}-L-asparaginyl-[protein] + GDP + H(+). The protein operates within protein modification; protein glycosylation. Inhibited by Cu(2+) or Zn(2+) and to a lesser extent Ni(2+) ions. Functionally, preferentially catalyzes the addition of fucose in alpha 1-3 linkage to the first GlcNAc residue (with or without alpha 1,6-linked fucose), next to the peptide chains in N-glycans. Unlike in mammals, does not require the prior action of N-acetylglucosaminyltransferase I to generate complex N-glycans. In Caenorhabditis elegans, this protein is Alpha-(1,3)-fucosyltransferase fut-1.